Consider the following 275-residue polypeptide: Elongation factor Ts (275 aa).

Residue lysine 36 forms an Isoglutamyl lysine isopeptide (Lys-Gln) (interchain with Q-Cter in protein Pup) linkage. An involved in Mg(2+) ion dislocation from EF-Tu region spans residues 76–79; that stretch reads TDFV.

The protein belongs to the EF-Ts family.

It localises to the cytoplasm. In terms of biological role, associates with the EF-Tu.GDP complex and induces the exchange of GDP to GTP. It remains bound to the aminoacyl-tRNA.EF-Tu.GTP complex up to the GTP hydrolysis stage on the ribosome. The polypeptide is Elongation factor Ts (Mycolicibacterium smegmatis (strain ATCC 700084 / mc(2)155) (Mycobacterium smegmatis)).